The following is a 943-amino-acid chain: Receptor-like protein 35 (943 aa).

Residues 1–31 (MTGSWNPTSIIIPVTLSFLLSFIHNFADVVA) form the signal peptide. Residues 32 to 897 (APTRHLCLPE…EEEDEEEISW (866 aa)) are Extracellular-facing. Asn-67, Asn-82, Asn-118, Asn-147, Asn-171, Asn-195, Asn-219, and Asn-222 each carry an N-linked (GlcNAc...) asparagine glycan. 11 LRR repeats span residues 124–148 (LQNLRVLDLTQNDLDGEIPSSIGNL), 150–171 (HLTSLHLSYNQFLGLIPSSIEN), 172–196 (LSRLTSLHLSSNQFSGQIPSSIGNL), 198–220 (HLTSLELSSNQFSGQIPSSIGNL), 222–244 (NLTFLSLPSNDFFGQIPSSIGNL), 245–267 (ARLTYLYLSYNNFVGEIPSSFGN), 268–292 (LNQLIVLQVDSNKLSGNVPISLLNL), 293–317 (TRLSALLLSHNQFTGTIPNNISLLS), 319–340 (LMDFEASNNAFTGTLPSSLFNI), 341–364 (PPLIRLDLSDNQLNGTLHFGNISS), and 366–389 (SNLQYLIIGSNNFIGTIPRSLSRF). 2 N-linked (GlcNAc...) asparagine glycosylation sites follow: Asn-291 and Asn-312. Asn-354 and Asn-361 each carry an N-linked (GlcNAc...) asparagine glycan. The LRR 12; degenerate repeat unit spans residues 390–414 (VNLTLFDLSHLNTQCRPVDFSIFSH). Residue Asn-391 is glycosylated (N-linked (GlcNAc...) asparagine). LRR repeat units lie at residues 415–439 (LKSLDDLRLSYLTTTTIDLNDILPY), 440–463 (FKTLRSLDISGNLVSATNKSSVSS), 467–490 (SQSIQSLYLSGCGITDFPEILRTQ), 491–514 (HELGFLDVSNNKIKGQVPGWLWTL), 515–537 (PNLFYLNLSNNTFISFESSSKKH), 544–568 (KPSMIHLFASNNNFTGKIPSFICGL), 569–592 (RSLNTLDLSENNYNGSIPRCMEKL), 593–617 (KSTLFVLNLRQNNLSGGLPKHIFES), 619–639 (RSLDVGHNLLVGKLPRSLIRF), 640–665 (SNLEVLNVESNRINDTFPFWLSSLSK), 667–685 (QVLVLRSNAFHGPIHEATF), 686–709 (PELRIIDISHNHFNGTLPTEYFVK), 753–777 (LTIYTALDFSGNKFEGEIPKSIGLL), 778–801 (KELLVLNLSNNAFGGHIPSSMGNL), 802–825 (TALESLDVSQNKLTGEIPQELGDL), and 827–850 (FLAYMNFSHNQLAGLVPGGTQFRR). Asn-457 carries an N-linked (GlcNAc...) asparagine glycan. Residues Asn-521, Asn-524, Asn-556, Asn-582, and Asn-605 are each glycosylated (N-linked (GlcNAc...) asparagine). An N-linked (GlcNAc...) asparagine glycan is attached at Asn-653. An N-linked (GlcNAc...) asparagine glycan is attached at Asn-699. N-linked (GlcNAc...) asparagine glycans are attached at residues Asn-784 and Asn-800. 3 N-linked (GlcNAc...) asparagine glycosylation sites follow: Asn-832, Asn-852, and Asn-882. The chain crosses the membrane as a helical span at residues 898-918 (IAAAIGFIPGIVFGLTIGYIL). Over 919-943 (VSYKPEWFMNPFGRNNRRRRNTTTH) the chain is Cytoplasmic.

Belongs to the RLP family.

It localises to the cell membrane. The protein is Receptor-like protein 35 of Arabidopsis thaliana (Mouse-ear cress).